The primary structure comprises 224 residues: Protein DEHYDRATION-INDUCED 19 homolog 4 (224 aa).

A compositionally biased stretch (polar residues) spans 1 to 12 (MDSNWINCPSVF). The segment at 1–23 (MDSNWINCPSVFSSSSSSSRRCQ) is disordered. Over residues 13–23 (SSSSSSSRRCQ) the composition is skewed to low complexity. Thr117 is modified (phosphothreonine).

The protein belongs to the Di19 family. Phosphorylated in vitro by CPK3 or CPK11. Expressed in seedlings, roots, leaves, stems, flowers and siliques.

It is found in the cytoplasm. Its subcellular location is the perinuclear region. This chain is Protein DEHYDRATION-INDUCED 19 homolog 4 (DI19-4), found in Arabidopsis thaliana (Mouse-ear cress).